We begin with the raw amino-acid sequence, 690 residues long: UvrABC system protein B (690 aa).

The Helicase ATP-binding domain occupies 39–422 (EGLDDGLSFQ…EQQHAGQVVE (384 aa)). 52–59 (GVTGSGKT) is a binding site for ATP. Residues 105–128 (YYDYYQPEAYVPSRDLFIEKDSSI) carry the Beta-hairpin motif. The Helicase C-terminal domain occupies 443 to 596 (QVDDLLAEIG…QIAFNLEHGI (154 aa)). One can recognise a UVR domain in the interval 640–675 (AREIKRLEKSMMECAKNLEFEKAAAARDDLFRLRER).

This sequence belongs to the UvrB family. As to quaternary structure, forms a heterotetramer with UvrA during the search for lesions. Interacts with UvrC in an incision complex.

It localises to the cytoplasm. In terms of biological role, the UvrABC repair system catalyzes the recognition and processing of DNA lesions. A damage recognition complex composed of 2 UvrA and 2 UvrB subunits scans DNA for abnormalities. Upon binding of the UvrA(2)B(2) complex to a putative damaged site, the DNA wraps around one UvrB monomer. DNA wrap is dependent on ATP binding by UvrB and probably causes local melting of the DNA helix, facilitating insertion of UvrB beta-hairpin between the DNA strands. Then UvrB probes one DNA strand for the presence of a lesion. If a lesion is found the UvrA subunits dissociate and the UvrB-DNA preincision complex is formed. This complex is subsequently bound by UvrC and the second UvrB is released. If no lesion is found, the DNA wraps around the other UvrB subunit that will check the other stand for damage. The polypeptide is UvrABC system protein B (Dechloromonas aromatica (strain RCB)).